A 278-amino-acid polypeptide reads, in one-letter code: Energy-coupling factor transporter ATP-binding protein EcfA (278 aa).

The ABC transporter domain occupies 5-240; sequence LETKNLVYNY…KEVIDEADLR (236 aa). 38 to 45 provides a ligand contact to ATP; that stretch reads GHNGAGKS.

This sequence belongs to the ABC transporter superfamily. Energy-coupling factor EcfA family. As to quaternary structure, forms a stable energy-coupling factor (ECF) transporter complex composed of 2 membrane-embedded substrate-binding proteins (S component), 2 ATP-binding proteins (A component) and 2 transmembrane proteins (T component).

Its subcellular location is the cell membrane. In terms of biological role, ATP-binding (A) component of a common energy-coupling factor (ECF) ABC-transporter complex. Unlike classic ABC transporters this ECF transporter provides the energy necessary to transport a number of different substrates. This Methanosphaera stadtmanae (strain ATCC 43021 / DSM 3091 / JCM 11832 / MCB-3) protein is Energy-coupling factor transporter ATP-binding protein EcfA.